A 571-amino-acid chain; its full sequence is Glutamate--tRNA ligase (571 aa).

Positions 110-120 match the 'HIGH' region motif; the sequence is PNPNGPATLGS.

This sequence belongs to the class-I aminoacyl-tRNA synthetase family. Glutamate--tRNA ligase type 2 subfamily.

The protein resides in the cytoplasm. The catalysed reaction is tRNA(Glu) + L-glutamate + ATP = L-glutamyl-tRNA(Glu) + AMP + diphosphate. Catalyzes the attachment of glutamate to tRNA(Glu) in a two-step reaction: glutamate is first activated by ATP to form Glu-AMP and then transferred to the acceptor end of tRNA(Glu). The chain is Glutamate--tRNA ligase from Methanosarcina barkeri (strain Fusaro / DSM 804).